The primary structure comprises 259 residues: BTB/POZ domain-containing protein KCTD4 (259 aa).

The interval 1–25 (MERKINRREKEKEYEGKHNSLEDTD) is disordered. In terms of domain architecture, BTB spans 33–134 (TLMTLNVGGY…EVKSRWEKEQ (102 aa)).

This Homo sapiens (Human) protein is BTB/POZ domain-containing protein KCTD4 (KCTD4).